The following is a 457-amino-acid chain: MVRGAVPRTTEFGELLYGKAVNLGGRVLIYGLGRSGRGVAHFLHGEGVSAFWHDLRPAPEDEALMRQLGHRQADLGGTYDLVVAAPGVPIDHRDLRVLAGRGAEIIGEVALAARLRPELPMVGITGTAGKGSTTVLIAQLLRACGLRAREGGNIDPPLLDVVDDAEVAVVELSSFQLERVPGLRLPVAVITNLGVDHLDRHGSVETYHAAKLNITAGQQSGDVLVRPADLPVPTRAQTVTFTPERLCLRDGQEVLPVADLPPGVHPANAAAALLAAEALLRHLGRAVDPAVLADALRAAQPVKGRFETVGQLGEVGFIEDSIATRTIAVESALRQARPPIAWLVGGRDKGAELAPLRAAAEGRVTRVIAFGEDGEALARDLGLPFEVIKAETGDESMDRAVRAGWEALGGAGGTGTVLLAPVGTSFDQFRDYQQRGASFRRAVQALLGTQSGSGESA.

126-132 serves as a coordination point for ATP; that stretch reads GTAGKGS.

The protein belongs to the MurCDEF family.

It is found in the cytoplasm. The enzyme catalyses UDP-N-acetyl-alpha-D-muramoyl-L-alanine + D-glutamate + ATP = UDP-N-acetyl-alpha-D-muramoyl-L-alanyl-D-glutamate + ADP + phosphate + H(+). The protein operates within cell wall biogenesis; peptidoglycan biosynthesis. Functionally, cell wall formation. Catalyzes the addition of glutamate to the nucleotide precursor UDP-N-acetylmuramoyl-L-alanine (UMA). This chain is UDP-N-acetylmuramoylalanine--D-glutamate ligase, found in Deinococcus radiodurans (strain ATCC 13939 / DSM 20539 / JCM 16871 / CCUG 27074 / LMG 4051 / NBRC 15346 / NCIMB 9279 / VKM B-1422 / R1).